A 305-amino-acid polypeptide reads, in one-letter code: Aspartate carbamoyltransferase catalytic subunit (305 aa).

Residues R52 and T53 each contribute to the carbamoyl phosphate site. K80 contacts L-aspartate. Residues R102, H132, and Q135 each coordinate carbamoyl phosphate. The L-aspartate site is built by R165 and R217. A258 and P259 together coordinate carbamoyl phosphate.

It belongs to the aspartate/ornithine carbamoyltransferase superfamily. ATCase family. In terms of assembly, heterododecamer (2C3:3R2) of six catalytic PyrB chains organized as two trimers (C3), and six regulatory PyrI chains organized as three dimers (R2).

It carries out the reaction carbamoyl phosphate + L-aspartate = N-carbamoyl-L-aspartate + phosphate + H(+). The protein operates within pyrimidine metabolism; UMP biosynthesis via de novo pathway; (S)-dihydroorotate from bicarbonate: step 2/3. In terms of biological role, catalyzes the condensation of carbamoyl phosphate and aspartate to form carbamoyl aspartate and inorganic phosphate, the committed step in the de novo pyrimidine nucleotide biosynthesis pathway. This Latilactobacillus sakei subsp. sakei (strain 23K) (Lactobacillus sakei subsp. sakei) protein is Aspartate carbamoyltransferase catalytic subunit.